The following is a 117-amino-acid chain: uncharacterized protein (117 aa).

This is an uncharacterized protein from Mus musculus (Mouse).